The sequence spans 403 residues: Protein LAZ1 homolog 2 (403 aa).

6 helical membrane-spanning segments follow: residues 16–36 (SLII…YSIL), 50–70 (WIVS…ISLS), 162–182 (MILK…GVYG), 191–211 (GYPY…FCLV), 236–256 (IVFA…YGIL), and 269–289 (FLIC…FPAE). The tract at residues 381 to 403 (SDGKEETEVTEEVTVETSVPPKE) is disordered.

It belongs to the TMEM184 family.

Its subcellular location is the membrane. The protein is Protein LAZ1 homolog 2 of Arabidopsis thaliana (Mouse-ear cress).